The following is a 176-amino-acid chain: Ribosome maturation factor RimM (176 aa).

A PRC barrel domain is found at 95-169 (EDEVYLFELE…TARIAPPPGL (75 aa)).

It belongs to the RimM family. Binds ribosomal protein uS19.

It localises to the cytoplasm. Functionally, an accessory protein needed during the final step in the assembly of 30S ribosomal subunit, possibly for assembly of the head region. Essential for efficient processing of 16S rRNA. May be needed both before and after RbfA during the maturation of 16S rRNA. It has affinity for free ribosomal 30S subunits but not for 70S ribosomes. This is Ribosome maturation factor RimM from Nitratidesulfovibrio vulgaris (strain ATCC 29579 / DSM 644 / CCUG 34227 / NCIMB 8303 / VKM B-1760 / Hildenborough) (Desulfovibrio vulgaris).